A 627-amino-acid polypeptide reads, in one-letter code: Probable inactive receptor kinase At3g02880 (627 aa).

A signal peptide spans 1 to 23; it reads MKYKRKLSLSVVFLFVFYLAAVT. 5 LRR repeats span residues 91-112, 115-137, 139-161, 163-184, and 185-206; these read QLKT…DFSN, LLRY…LFTL, SIIR…VNSA, RLVT…ITLP, and LQQF…LSSW. A disordered region spans residues 222–246; the sequence is DTCEAESPNGGDAGGPNTPPEKKDS. Residues 253 to 273 form a helical membrane-spanning segment; the sequence is AIVGIVIGCVVGLLLLLLILF. The 276-residue stretch at 345–620 folds into the Protein kinase domain; sequence KASAEVLGKG…LIEEVSHSSG (276 aa). Residue Ser347 is modified to Phosphoserine. ATP is bound by residues 351–359 and Lys373; that span reads LGKGTVGSS. The chain crosses the membrane as a helical span at residues 389 to 409; it reads LHVLGSMSHANLVTLIAYYFS. Position 424 is a phosphoserine (Ser424). A Phosphothreonine modification is found at Thr444. Ser519 is modified (phosphoserine). Position 595 is a phosphothreonine (Thr595). Ser621 and Ser626 each carry phosphoserine.

This sequence belongs to the protein kinase superfamily. Ser/Thr protein kinase family.

It is found in the membrane. In Arabidopsis thaliana (Mouse-ear cress), this protein is Probable inactive receptor kinase At3g02880.